The chain runs to 310 residues: Vomeronasal type-1 receptor 50 (310 aa).

The Extracellular portion of the chain corresponds to 1-16 (MSKANLLHTDNNMKIT). A helical membrane pass occupies residues 17–37 (LFSEVSVGISANSILFVVHLC). At 38 to 50 (KLLHENKPKPIDL) the chain is on the cytoplasmic side. The helical transmembrane segment at 51–71 (YIAFFSITQLMLLITMGLIAV) threads the bilayer. At 72-93 (DMFMPWGRWDSTTCQSLIYLHR) the chain is on the extracellular side. Cys85 and Cys172 form a disulfide bridge. Residues 94 to 114 (LLRGLTFCATCLLNVLWTITL) form a helical membrane-spanning segment. At 115–134 (SPRSSCLTKFKHKSPHHISG) the chain is on the cytoplasmic side. Residues 135-155 (AFLFFCVLYMSFSSHLLVSII) traverse the membrane as a helical segment. Residues 156-193 (ATFNSTSDNFLYVTQSCSILPVSYSRTSILSTMMTMRE) are Extracellular-facing. Asn159 carries an N-linked (GlcNAc...) asparagine glycan. The helical transmembrane segment at 194-214 (AFLIGLMALSSGYVVVLLWRH) threads the bilayer. Residues 215-237 (KKQARHLHSTSLSSKASPEQRAT) are Cytoplasmic-facing. A helical transmembrane segment spans residues 238-258 (STIMLLMGFFVVLYILDTVIF). The Extracellular portion of the chain corresponds to 259 to 269 (QARLKFKDVST). Residues 270 to 290 (FFCVKIIISHSYATFSPFVFI) form a helical membrane-spanning segment. The Cytoplasmic segment spans residues 291-310 (CNDKYMIKFVTSMCGRIVNV).

It belongs to the G-protein coupled receptor 1 family. Expressed in a subset of sensory neurons located in the apical layer of the vomeronasal organ.

Its subcellular location is the cell membrane. Functionally, putative pheromone receptor implicated in the regulation of social and reproductive behavior. The protein is Vomeronasal type-1 receptor 50 (Vmn1r50) of Mus musculus (Mouse).